The following is a 469-amino-acid chain: 3-isopropylmalate dehydratase large subunit (469 aa).

[4Fe-4S] cluster-binding residues include cysteine 349, cysteine 410, and cysteine 413.

This sequence belongs to the aconitase/IPM isomerase family. LeuC type 1 subfamily. As to quaternary structure, heterodimer of LeuC and LeuD. [4Fe-4S] cluster serves as cofactor.

The catalysed reaction is (2R,3S)-3-isopropylmalate = (2S)-2-isopropylmalate. The protein operates within amino-acid biosynthesis; L-leucine biosynthesis; L-leucine from 3-methyl-2-oxobutanoate: step 2/4. Functionally, catalyzes the isomerization between 2-isopropylmalate and 3-isopropylmalate, via the formation of 2-isopropylmaleate. This is 3-isopropylmalate dehydratase large subunit from Azoarcus sp. (strain BH72).